Reading from the N-terminus, the 98-residue chain is uncharacterized protein (98 aa).

Over residues 19–31 the composition is skewed to basic residues; the sequence is RRMSKRSKNKAKK. Residues 19–47 form a disordered region; the sequence is RRMSKRSKNKAKKERVPVEDRPPTPMPTS.

It belongs to the lymphocryptovirus BNLF2B family.

This is an uncharacterized protein from Epstein-Barr virus (strain AG876) (HHV-4).